A 60-amino-acid chain; its full sequence is Homeobox protein CHOX-CAD2 (60 aa).

The homeobox DNA-binding region spans 1–60; that stretch reads KEKYRVVYTDHQRLELEKEFHCNRYITIRRKSELAVNLGLSERQVKSWFQNRRAKERKII.

It belongs to the Caudal homeobox family.

Its subcellular location is the nucleus. The protein is Homeobox protein CHOX-CAD2 (CHOX-CAD2) of Gallus gallus (Chicken).